The chain runs to 284 residues: ATP synthase subunit a (284 aa).

5 consecutive transmembrane segments (helical) span residues Ala-47 to Phe-67, Val-108 to Val-128, Val-156 to Ile-176, Met-233 to Trp-253, and Ala-254 to Val-274.

The protein belongs to the ATPase A chain family. As to quaternary structure, F-type ATPases have 2 components, CF(1) - the catalytic core - and CF(0) - the membrane proton channel. CF(1) has five subunits: alpha(3), beta(3), gamma(1), delta(1), epsilon(1). CF(0) has three main subunits: a(1), b(2) and c(9-12). The alpha and beta chains form an alternating ring which encloses part of the gamma chain. CF(1) is attached to CF(0) by a central stalk formed by the gamma and epsilon chains, while a peripheral stalk is formed by the delta and b chains.

The protein resides in the cell inner membrane. In terms of biological role, key component of the proton channel; it plays a direct role in the translocation of protons across the membrane. In Ruthia magnifica subsp. Calyptogena magnifica, this protein is ATP synthase subunit a.